Consider the following 216-residue polypeptide: Small ribosomal subunit protein uS3c (216 aa).

The 76-residue stretch at 43–118 (IKNYIQKNRR…KLNIAIVKVT (76 aa)) folds into the KH type-2 domain.

It belongs to the universal ribosomal protein uS3 family. In terms of assembly, part of the 30S ribosomal subunit.

The protein localises to the plastid. It is found in the chloroplast. This Phaseolus angularis (Azuki bean) protein is Small ribosomal subunit protein uS3c (rps3).